The following is a 477-amino-acid chain: Ketoisovalerate oxidoreductase subunit VorA (477 aa).

Heterotrimer of the VorA, VorB and VorC subunits.

It catalyses the reaction 3-methyl-2-oxobutanoate + 2 oxidized [2Fe-2S]-[ferredoxin] + CoA = 2-methylpropanoyl-CoA + 2 reduced [2Fe-2S]-[ferredoxin] + CO2 + H(+). The polypeptide is Ketoisovalerate oxidoreductase subunit VorA (vorA) (Methanothermobacter thermautotrophicus (strain ATCC 29096 / DSM 1053 / JCM 10044 / NBRC 100330 / Delta H) (Methanobacterium thermoautotrophicum)).